Consider the following 371-residue polypeptide: Protein-tyrosine sulfotransferase 2 (371 aa).

Over 1–8 (MRVTMRRV) the chain is Cytoplasmic. The chain crosses the membrane as a helical; Signal-anchor for type II membrane protein span at residues 9–25 (LLAVGSVVALMVTLHLG). Topologically, residues 26 to 371 (QQVLECQHVL…QVTQNTSSSH (346 aa)) are lumenal. 76 to 80 (RSGTT) lines the 3'-phosphoadenylyl sulfate pocket. Cysteine 94 and cysteine 154 are oxidised to a cystine. Catalysis depends on glutamate 97, which acts as the Proton donor/acceptor. Positions 99–103 (RIIPR) are interaction with peptide substrate. 3'-phosphoadenylyl sulfate is bound by residues arginine 181, serine 189, and arginine 193. Cysteine 223 and cysteine 231 are joined by a disulfide. 3'-phosphoadenylyl sulfate contacts are provided by residues tyrosine 236, 283-292 (STDQVIKPVN), and lysine 298. 2 N-linked (GlcNAc...) asparagine glycosylation sites follow: asparagine 341 and asparagine 366.

The protein belongs to the protein sulfotransferase family.

The protein resides in the golgi apparatus membrane. The catalysed reaction is L-tyrosyl-[protein] + 3'-phosphoadenylyl sulfate = O-sulfo-L-tyrosine-[protein] + adenosine 3',5'-bisphosphate + H(+). In terms of biological role, catalyzes the O-sulfation of tyrosine residues within acidic motifs of polypeptides, using 3'-phosphoadenylyl sulfate (PAPS) as cosubstrate. The polypeptide is Protein-tyrosine sulfotransferase 2 (TPST2) (Gallus gallus (Chicken)).